We begin with the raw amino-acid sequence, 221 residues long: Leucine rich adaptor protein 1-like (221 aa).

Met-1 is modified (N-acetylmethionine). Positions 24–81 (LARSLRGEELAPREGAADPSGVGGSCSSSSSCSSFAPSVSSSSSSSPASGSPRRSHPS) are disordered. Positions 28–39 (LRGEELAPREGA) are enriched in basic and acidic residues. Residues 48 to 75 (SCSSSSSCSSFAPSVSSSSSSSPASGSP) show a composition bias toward low complexity.

This chain is Leucine rich adaptor protein 1-like (Lurap1l), found in Mus musculus (Mouse).